A 532-amino-acid chain; its full sequence is Protein PTST homolog 2, chloroplastic (532 aa).

Residues M1–R71 constitute a chloroplast transit peptide. 4 disordered regions span residues Q165–D201, E256–W292, S314–N347, and H367–N388. Basic and acidic residues predominate over residues E173–L183. Positions V320–I339 are enriched in basic and acidic residues. Positions L389–T454 form a coiled coil.

In terms of assembly, interacts with PTST3 and SS4. Interacts with MFP1; the interaction is essential for the initiation of starch granules biosynthesis in leaf chloroplasts, for the correct location of the process in the stromal spaces between the thylakoid membranes, and for the association of this protein with the thylakoid membranes. Interacts with PII1/MRC; the interaction is essential for the initiation of starch granules biosynthesis in leaf chloroplasts.

The protein localises to the plastid. Its subcellular location is the chloroplast. It is found in the chloroplast thylakoid membrane. In terms of biological role, involved in starch granule initiation in leaf chloroplasts. Binds and delivers suitable maltooligosaccharide substrates to starch synthase 4 (SS4). This Arabidopsis thaliana (Mouse-ear cress) protein is Protein PTST homolog 2, chloroplastic.